We begin with the raw amino-acid sequence, 266 residues long: Diphthine synthase (266 aa).

Residues L9, D85, I88, 113 to 114 (TA), L168, A210, and H235 contribute to the S-adenosyl-L-methionine site.

This sequence belongs to the diphthine synthase family. As to quaternary structure, homodimer.

It catalyses the reaction 2-[(3S)-amino-3-carboxypropyl]-L-histidyl-[translation elongation factor 2] + 3 S-adenosyl-L-methionine = diphthine-[translation elongation factor 2] + 3 S-adenosyl-L-homocysteine + 3 H(+). The protein operates within protein modification; peptidyl-diphthamide biosynthesis. Its function is as follows. S-adenosyl-L-methionine-dependent methyltransferase that catalyzes the trimethylation of the amino group of the modified target histidine residue in translation elongation factor 2 (EF-2), to form an intermediate called diphthine. The three successive methylation reactions represent the second step of diphthamide biosynthesis. This Natronomonas pharaonis (strain ATCC 35678 / DSM 2160 / CIP 103997 / JCM 8858 / NBRC 14720 / NCIMB 2260 / Gabara) (Halobacterium pharaonis) protein is Diphthine synthase.